Here is a 558-residue protein sequence, read N- to C-terminus: Factor VII-activating protease (558 aa).

An N-terminal signal peptide occupies residues 1-23 (MSVVMLVFRVLLLIALVGNSAIG). EGF-like domains follow at residues 71-107 (DDDP…SRCQ), 109-146 (VQNK…PDCS), and 148-186 (VLPV…RFCE). 18 disulfides stabilise this stretch: Cys-75-Cys-86, Cys-80-Cys-95, Cys-97-Cys-106, Cys-113-Cys-123, Cys-118-Cys-134, Cys-136-Cys-145, Cys-152-Cys-163, Cys-157-Cys-174, Cys-176-Cys-185, Cys-192-Cys-274, Cys-213-Cys-255, Cys-244-Cys-269, Cys-299-Cys-433, Cys-345-Cys-361, Cys-353-Cys-422, Cys-445-Cys-513, Cys-475-Cys-491, and Cys-503-Cys-531. Residues 191–274 (DCYVGDGYSY…KWEYCNVEVC (84 aa)) enclose the Kringle domain. In terms of domain architecture, Peptidase S1 spans 312-553 (IYGGFKSTAG…FLNWIKTTMH (242 aa)). Catalysis depends on charge relay system residues His-360 and Asp-409. The Charge relay system role is filled by Ser-507.

This sequence belongs to the peptidase S1 family. In terms of assembly, heterodimer; disulfide-linked. Heterodimer of a 50 kDa heavy and a 27 kDa light chain linked by a disulfide bond. Proteolytic cleavage at Gly-23 or Met-27 can give rise to the 50 kDa heavy chain (HC) and cleavage at Arg-311 or Lys-317 can give rise to the 27 kDa light chain (LC). The HC can undergo further proteolytic cleavage giving rise to a 26 kDa fragment. The LC can undergo further proteolytic cleavage at Arg-311 leading to a 17-kDa fragment and at Arg-478 leading to a 8-kDa fragment.

It is found in the secreted. Cleaves the alpha-chain at multiple sites and the beta-chain between 'Lys-53' and 'Lys-54' but not the gamma-chain of fibrinogen and therefore does not initiate the formation of the fibrin clot and does not cause the fibrinolysis directly. It does not cleave (activate) prothrombin and plasminogen but converts the inactive single chain urinary plasminogen activator (pro-urokinase) to the active two chain form. Activates coagulation factor VII. May function as a tumor suppressor negatively regulating cell proliferation and cell migration. This chain is Factor VII-activating protease, found in Rattus norvegicus (Rat).